Consider the following 342-residue polypeptide: S-adenosyl-L-methionine-dependent tRNA 4-demethylwyosine synthase (342 aa).

[2Fe-2S] cluster contacts are provided by Cys-45, Cys-58, and Cys-71. Residues 64 to 312 (YGIHSHRCLQ…VKHLPGYHIE (249 aa)) enclose the Radical SAM core domain. 3 residues coordinate [4Fe-4S] cluster: Cys-81, Cys-85, and Cys-88.

The protein belongs to the TYW1 family. As to quaternary structure, monomer. Requires [2Fe-2S] cluster as cofactor. [4Fe-4S] cluster is required as a cofactor.

The protein localises to the cytoplasm. It catalyses the reaction N(1)-methylguanosine(37) in tRNA(Phe) + pyruvate + S-adenosyl-L-methionine = 4-demethylwyosine(37) in tRNA(Phe) + 5'-deoxyadenosine + L-methionine + CO2 + H2O. Functionally, component of the wyosine derivatives biosynthesis pathway that catalyzes the condensation of N-methylguanine with 2 carbon atoms from pyruvate to form the tricyclic 4-demethylwyosine (imG-14) on guanosine-37 of tRNA(Phe). The chain is S-adenosyl-L-methionine-dependent tRNA 4-demethylwyosine synthase from Pyrococcus horikoshii (strain ATCC 700860 / DSM 12428 / JCM 9974 / NBRC 100139 / OT-3).